Consider the following 454-residue polypeptide: UPF0210 protein BLA_0552 (454 aa).

Belongs to the UPF0210 family. Homodimer.

This is UPF0210 protein BLA_0552 from Bifidobacterium animalis subsp. lactis (strain AD011).